The sequence spans 407 residues: Succinate--CoA ligase [ADP-forming] subunit beta, hydrogenosomal (407 aa).

Residues 1–9 (MLSSSFARN) constitute a hydrogenosome transit peptide. An ATP-grasp domain is found at 18–261 (KEICAKYNVA…LKQVNPFEIR (244 aa)). Residues Lys-55, 62–64 (GRG), and Glu-124 each bind ATP. Residues Asn-216 and Asp-230 each contribute to the Mg(2+) site. Residues Asn-281 and 338 to 340 (GIV) each bind substrate.

This sequence belongs to the succinate/malate CoA ligase beta subunit family. In terms of assembly, heterodimer of an alpha and a beta subunit. Requires Mg(2+) as cofactor.

The protein localises to the hydrogenosome. The catalysed reaction is succinate + ATP + CoA = succinyl-CoA + ADP + phosphate. The protein operates within carbohydrate metabolism; tricarboxylic acid cycle; succinate from succinyl-CoA (ligase route): step 1/1. Functionally, succinyl-CoA synthetase functions in the citric acid cycle (TCA), coupling the hydrolysis of succinyl-CoA to the synthesis of ATP and thus represents the only step of substrate-level phosphorylation in the TCA. The beta subunit provides nucleotide specificity of the enzyme and binds the substrate succinate, while the binding sites for coenzyme A and phosphate are found in the alpha subunit. The protein is Succinate--CoA ligase [ADP-forming] subunit beta, hydrogenosomal of Trichomonas vaginalis.